The chain runs to 264 residues: Acyl-[acyl-carrier-protein]--UDP-N-acetylglucosamine O-acyltransferase (264 aa).

The protein belongs to the transferase hexapeptide repeat family. LpxA subfamily. In terms of assembly, homotrimer.

It localises to the cytoplasm. It carries out the reaction a (3R)-hydroxyacyl-[ACP] + UDP-N-acetyl-alpha-D-glucosamine = a UDP-3-O-[(3R)-3-hydroxyacyl]-N-acetyl-alpha-D-glucosamine + holo-[ACP]. It functions in the pathway glycolipid biosynthesis; lipid IV(A) biosynthesis; lipid IV(A) from (3R)-3-hydroxytetradecanoyl-[acyl-carrier-protein] and UDP-N-acetyl-alpha-D-glucosamine: step 1/6. In terms of biological role, involved in the biosynthesis of lipid A, a phosphorylated glycolipid that anchors the lipopolysaccharide to the outer membrane of the cell. The protein is Acyl-[acyl-carrier-protein]--UDP-N-acetylglucosamine O-acyltransferase of Chlorobium phaeobacteroides (strain DSM 266 / SMG 266 / 2430).